Reading from the N-terminus, the 415-residue chain is Leucine-rich repeat-containing protein 34 (415 aa).

LRR repeat units follow at residues 246–272 (TLRY…LKSN) and 274–296 (TLEV…LSET).

As to quaternary structure, interacts with NPM1 and NCL.

It is found in the nucleus. It localises to the nucleolus. Its subcellular location is the cytoplasm. Its function is as follows. Highly expressed in stem cells where it may be involved in regulation of pluripotency. In embryonic stem cells (ESCs), important for normal expression of the pluripotency regulators POU5F1/OCT4 and KLF4. Also important for expression of the ectodermal marker gene NES and the endodermal marker gene GATA4. Promotes stem cell proliferation in vitro. This is Leucine-rich repeat-containing protein 34 (Lrrc34) from Rattus norvegicus (Rat).